Reading from the N-terminus, the 895-residue chain is Probable LRR receptor-like serine/threonine-protein kinase At5g48740 (895 aa).

The first 16 residues, 1–16 (MLFWVLLSSFCVFCFS), serve as a signal peptide directing secretion. Topologically, residues 17–544 (SPDGFLSLSC…INKKQRKQNR (528 aa)) are extracellular. N-linked (GlcNAc...) asparagine glycans are attached at residues asparagine 36, asparagine 50, asparagine 60, asparagine 140, asparagine 195, asparagine 234, and asparagine 318. LRR repeat units follow at residues 385–407 (RVTSLFLSKINLRSISPTFGDLL), 408–430 (DLKTLDLHNTSLTGAIQNVGSLK), 431–453 (DLQKLNLSFNQLESFGSELEDLV), 454–477 (NLEVLDLQNNSLQGSVPETLGKLK), 478–500 (KLRLLNLENNNLVGPLPQSLNIT), and 511–532 (CLSFSSISCNNVSSTIDTPQVT). Asparagine 416, asparagine 436, asparagine 462, asparagine 498, and asparagine 521 each carry an N-linked (GlcNAc...) asparagine glycan. A helical membrane pass occupies residues 545 to 565 (IAILLGVSGGALFATFLVFVF). The Cytoplasmic portion of the chain corresponds to 566–895 (MSIFTRRQRN…SYLAASAHTD (330 aa)). The region spanning 606-888 (RNFKEVIGRG…EAYSLQLSYL (283 aa)) is the Protein kinase domain. ATP contacts are provided by residues 612–620 (IGRGSFGAV) and lysine 634. Tyrosine 679 bears the Phosphotyrosine mark. The Proton acceptor role is filled by aspartate 732. Serine 736 carries the post-translational modification Phosphoserine. A phosphothreonine mark is found at threonine 767 and threonine 772. Residue tyrosine 780 is modified to Phosphotyrosine.

This sequence belongs to the protein kinase superfamily. Ser/Thr protein kinase family.

It is found in the membrane. It carries out the reaction L-seryl-[protein] + ATP = O-phospho-L-seryl-[protein] + ADP + H(+). The catalysed reaction is L-threonyl-[protein] + ATP = O-phospho-L-threonyl-[protein] + ADP + H(+). This Arabidopsis thaliana (Mouse-ear cress) protein is Probable LRR receptor-like serine/threonine-protein kinase At5g48740.